Consider the following 88-residue polypeptide: Small ribosomal subunit protein uS15c (88 aa).

The protein belongs to the universal ribosomal protein uS15 family. As to quaternary structure, part of the 30S ribosomal subunit.

Its subcellular location is the plastid. It is found in the chloroplast. This Lepidium virginicum (Virginia pepperweed) protein is Small ribosomal subunit protein uS15c (rps15).